The following is a 247-amino-acid chain: DNA polymerase sliding clamp (247 aa).

This sequence belongs to the PCNA family. As to quaternary structure, homotrimer. The subunits circularize to form a toroid; DNA passes through its center. Replication factor C (RFC) is required to load the toroid on the DNA.

Its function is as follows. Sliding clamp subunit that acts as a moving platform for DNA processing. Responsible for tethering the catalytic subunit of DNA polymerase and other proteins to DNA during high-speed replication. The sequence is that of DNA polymerase sliding clamp from Methanospirillum hungatei JF-1 (strain ATCC 27890 / DSM 864 / NBRC 100397 / JF-1).